The following is a 540-amino-acid chain: Probable G-protein coupled receptor 75 (540 aa).

The Extracellular segment spans residues 1–46 (MNTSAPLQNVPNATLLNMPPLHGGNSTSLQEGLRDFIHTATLVTCT). 2 N-linked (GlcNAc...) asparagine glycosylation sites follow: N2 and N25. A helical membrane pass occupies residues 47–67 (FLLAIIFCLGSYGNFIVFLSF). The Cytoplasmic segment spans residues 68–86 (FDPSFRKFRTNFDFMILNL). The helical transmembrane segment at 87–107 (SFCDLFICGVTAPMFTFVLFF) threads the bilayer. Residues 108-120 (SSASSIPDSFCFT) lie on the Extracellular side of the membrane. Residues 121–141 (FHLTSSGFVIMSLKMVAVIAL) form a helical membrane-spanning segment. Topologically, residues 142 to 160 (HRLRMVMGKQPNCTASFSC) are cytoplasmic. Residues 161–181 (ILLLTLLLWATSFTLATLATL) traverse the membrane as a helical segment. At 182-205 (RTNKSHLCLPMSSLMDGEGKAILS) the chain is on the extracellular side. Residue N184 is glycosylated (N-linked (GlcNAc...) asparagine). Residues 206 to 226 (LYVVDFTFCVAVVSVSYIMIA) traverse the membrane as a helical segment. Residues 227-318 (QTLRKNAQVK…INFSTAKDSK (92 aa)) lie on the Cytoplasmic side of the membrane. Residues 319 to 339 (AVVTCVVIVLSVLVCCLPLGI) traverse the membrane as a helical segment. At 340–350 (SLVQMVLSDNG) the chain is on the extracellular side. Residues 351–371 (SFILYQFELFGFTLIFFKSGL) form a helical membrane-spanning segment. The Cytoplasmic portion of the chain corresponds to 372–540 (NPFIYSRNSA…SAKQIPIPSV (169 aa)). The segment at 443–475 (DQACGPSHSKESAASPKVSAGHQPCGQSSSTPI) is disordered.

The protein belongs to the G-protein coupled receptor 1 family. In terms of tissue distribution, highly expressed in brain and heart. Also detected in skeletal muscle, liver and kidney. Also expressed by islet cells (at protein level).

It localises to the cell membrane. Functionally, g protein-coupled receptor that is activated by the chemokine CCL5/RANTES. Probably coupled to heterotrimeric Gq proteins, it stimulates inositol trisphosphate production and calcium mobilization upon activation. Together with CCL5/RANTES, may play a role in neuron survival through activation of a downstream signaling pathway involving the PI3, Akt and MAP kinases. CCL5/RANTES may also regulate insulin secretion by pancreatic islet cells through activation of this receptor. The chain is Probable G-protein coupled receptor 75 (Gpr75) from Mus musculus (Mouse).